Consider the following 398-residue polypeptide: MSNMDPNSVLPKRSFLQHELFSQLHIPGSLAFEAFSCISKFTGALLCWFSHGNLQKEVSKHQWGLTCKSRDSLKHVFEHRNVSVFPFHYVSKDISPGFFGNISKSTIQHFVNEAERLHSCSLLSLAAAMIPSLNVMSANGLALPLGSNDVKLRENIEHRTCPENTEHRTCQVGCEEYSGLSFQKLDWTRQSVEPRTGIEFPMLLKENASRSNSEVLVATGSRTMKIIRIKSLKVYAFGFYVHPSSVCQKLGRKYASVPASKLDKCDDLYKDLLREDIVMSVRLVVNYNGLKINTVRDVFEKSLRARLVKANPKTDFNCLNDFGSFFRQDIPIPAGTIIDFRRTEDGQLITEIGGNLIGAVRSKDLCRAFFGMYIGDVPVSEQTKEEIGRKVVGIIKRC.

The dodecanoate site is built by R222, Y235, and S302.

This sequence belongs to the chalcone isomerase family. As to expression, expressed in developing cotyledons, young seedlings, roots, seeds, embryos, macrospores, preanthesis and tapetum. Restricted to developing and reproductive tissues.

It localises to the plastid. It is found in the chloroplast stroma. Functionally, fatty-acid-binding protein. Associates with saturated fatty acid. The sequence is that of Fatty-acid-binding protein 2 (FAP2) from Arabidopsis thaliana (Mouse-ear cress).